Consider the following 623-residue polypeptide: Chaperone protein dnaK (623 aa).

Positions 598–623 (TPDAGAEGGAAPSQDDAIETDFSTEK) are disordered.

This sequence belongs to the heat shock protein 70 family.

It is found in the plastid. Its subcellular location is the chloroplast. In terms of biological role, acts as a chaperone. This chain is Chaperone protein dnaK, found in Emiliania huxleyi (Coccolithophore).